A 419-amino-acid polypeptide reads, in one-letter code: Mitochondrial chaperone BCS1 (419 aa).

Residues Pro-2–Tyr-15 lie on the Mitochondrial intermembrane side of the membrane. Residues Phe-16–Ala-32 traverse the membrane as a helical segment. Residues Arg-33–Arg-419 are Mitochondrial matrix-facing. Phosphotyrosine is present on Tyr-181. Gly-230–Ser-237 is an ATP binding site.

This sequence belongs to the AAA ATPase family. BCS1 subfamily. Interacts with LETM1. As to expression, ubiquitous.

The protein resides in the mitochondrion inner membrane. The enzyme catalyses ATP + H2O = ADP + phosphate + H(+). Functionally, chaperone necessary for the incorporation of Rieske iron-sulfur protein UQCRFS1 into the mitochondrial respiratory chain complex III. Plays an important role in the maintenance of mitochondrial tubular networks, respiratory chain assembly and formation of the LETM1 complex. The chain is Mitochondrial chaperone BCS1 (BCS1L) from Homo sapiens (Human).